A 332-amino-acid polypeptide reads, in one-letter code: Ferredoxin--NADP reductase 2 (332 aa).

Glu37, Gln45, Tyr50, Val90, Phe124, Asp285, and Thr326 together coordinate FAD.

The protein belongs to the ferredoxin--NADP reductase type 2 family. Homodimer. Requires FAD as cofactor.

It carries out the reaction 2 reduced [2Fe-2S]-[ferredoxin] + NADP(+) + H(+) = 2 oxidized [2Fe-2S]-[ferredoxin] + NADPH. In Bacillus pumilus (strain SAFR-032), this protein is Ferredoxin--NADP reductase 2.